The primary structure comprises 280 residues: MRMKETLTEIFQNKIVDILLVAVILWIGVFIINRLVQLFFKRTDFIEEKKEKTIESLVRSVTQYTATIGFIFYVISLFVHDFGKILAGAGVAGIVIGFGAQSLIKDVLAGVFLIYERQLHKGDYVTVNNLFNGTVEEIGLRSLQIREWSGKLLTISNGEVRQIENYNIDFMRITESFLISFKEDPDRVYSVLEEACDMLNEELRDSLKRDEFGNPTEPFQIHGITALNKINRGVEFTVKGMVKDDDYFSASLAVRRVLVRQLYQNNVQMLEEAVRIERTQ.

Transmembrane regions (helical) follow at residues 15–35 (IVDILLVAVILWIGVFIINRL), 68–88 (IGFIFYVISLFVHDFGKILAG), and 94–114 (IVIGFGAQSLIKDVLAGVFLI).

The protein belongs to the MscS (TC 1.A.23) family.

The protein localises to the cell membrane. Functionally, may play a role in resistance to osmotic downshock. This is an uncharacterized protein from Bacillus subtilis (strain 168).